The chain runs to 1364 residues: Pleckstrin homology domain-containing family H member 1 (1364 aa).

A coiled-coil region spans residues 28 to 169 (FRLQASKIRE…VGSLQDALEA (142 aa)). Disordered stretches follow at residues 184–266 (GAAE…SPPH), 296–321 (GTKTSAREGGPGSSLTLPKVRAPGTP), 356–395 (LHPSGLPELESRARSREEPEKMEMEEPPPAGKNEERESPK), 487–529 (PFMD…IKRG), and 546–568 (DACSLDSDYSEPEHKLQRTSSYS). The span at 237-246 (EDSSSSTVHS) shows a compositional bias: polar residues. A compositionally biased stretch (basic and acidic residues) spans 364–379 (LESRARSREEPEKMEM). A compositionally biased stretch (polar residues) spans 509 to 520 (VPSSESRKTSGL). 2 PH domains span residues 578-672 (SLEK…SLLK) and 687-796 (KPTV…VAAG). At S745 the chain carries Phosphoserine. Residues 832 to 986 (YSKDGLYASL…PSRMEVVSIL (155 aa)) enclose the MyTH4 domain. Residues 997-1333 (FSIPVHFTNG…NHCTTTVNPP (337 aa)) form the FERM domain.

The chain is Pleckstrin homology domain-containing family H member 1 (PLEKHH1) from Homo sapiens (Human).